The primary structure comprises 254 residues: Alcohol dehydrogenase (254 aa).

Position 10–33 (10–33 (FVAGLGGIGLDTSREIVKSGPKNL)) interacts with NAD(+). S138 contacts substrate. Y151 serves as the catalytic Proton acceptor.

This sequence belongs to the short-chain dehydrogenases/reductases (SDR) family. In terms of assembly, homodimer.

The catalysed reaction is a primary alcohol + NAD(+) = an aldehyde + NADH + H(+). It carries out the reaction a secondary alcohol + NAD(+) = a ketone + NADH + H(+). This is Alcohol dehydrogenase (Adh) from Drosophila grimshawi (Hawaiian fruit fly).